The following is a 62-amino-acid chain: LKCHNTQLPFIYKTCPEGKNLCFKATLKKFPLKIPIKRGCADNCPKNSALLKYVCCSTDKCN.

4 cysteine pairs are disulfide-bonded: Cys-3-Cys-22, Cys-15-Cys-40, Cys-44-Cys-55, and Cys-56-Cys-61.

The protein belongs to the three-finger toxin family. Short-chain subfamily. Orphan group XV sub-subfamily. Expressed by the venom gland.

It localises to the secreted. The protein resides in the target cell membrane. In terms of biological role, has low cytotoxic activity. The sequence is that of Cytotoxin homolog from Naja kaouthia (Monocled cobra).